The sequence spans 711 residues: Serine/threonine-protein kinase ATG1b (711 aa).

The region spanning 20-277 is the Protein kinase domain; that stretch reads YAVGRQIGSG…FEEFFHHPFL (258 aa). ATP-binding positions include 26–34 and K49; that span reads IGSGSFSVV. D142 serves as the catalytic Proton acceptor. 2 disordered regions span residues 318 to 342 and 383 to 419; these read LPFFLDDDSSGPEGSPSSFKHTSPM and FEGHRLSDRSQFKPSSLPDSRSFSTQGRGDSPDSMDQ. Residues 383 to 393 show a composition bias toward basic and acidic residues; sequence FEGHRLSDRSQ. The span at 394–410 shows a compositional bias: polar residues; sequence FKPSSLPDSRSFSTQGR. Residues 421–424 carry the AIM (Atg8-family-interacting motif) motif; it reads YVLI.

It belongs to the protein kinase superfamily. Ser/Thr protein kinase family.

It localises to the cytoplasmic vesicle. The protein resides in the autophagosome. Functionally, serine/threonine protein kinase involved in autophagy. The ATG1-ATG13 protein kinase complex regulates downstream events required for autophagosome enclosure and/or vacuolar delivery. The polypeptide is Serine/threonine-protein kinase ATG1b (Arabidopsis thaliana (Mouse-ear cress)).